The sequence spans 513 residues: 2-isopropylmalate synthase (513 aa).

A Pyruvate carboxyltransferase domain is found at 5–268; that stretch reads LIIFDTTLRD…DVGVDTSQIV (264 aa). The Mn(2+) site is built by D14, H202, H204, and N239. A regulatory domain region spans residues 394 to 513; sequence RFISLSQRSE…KAVQKINPQI (120 aa).

It belongs to the alpha-IPM synthase/homocitrate synthase family. LeuA type 1 subfamily. As to quaternary structure, homodimer. Mn(2+) is required as a cofactor.

Its subcellular location is the cytoplasm. The catalysed reaction is 3-methyl-2-oxobutanoate + acetyl-CoA + H2O = (2S)-2-isopropylmalate + CoA + H(+). Its pathway is amino-acid biosynthesis; L-leucine biosynthesis; L-leucine from 3-methyl-2-oxobutanoate: step 1/4. In terms of biological role, catalyzes the condensation of the acetyl group of acetyl-CoA with 3-methyl-2-oxobutanoate (2-ketoisovalerate) to form 3-carboxy-3-hydroxy-4-methylpentanoate (2-isopropylmalate). This is 2-isopropylmalate synthase from Cupriavidus pinatubonensis (strain JMP 134 / LMG 1197) (Cupriavidus necator (strain JMP 134)).